The chain runs to 234 residues: Hydrolase in agr operon (234 aa).

The 212-residue stretch at isoleucine 1–isoleucine 212 folds into the CN hydrolase domain. Glutamate 14 (proton acceptor) is an active-site residue. Catalysis depends on lysine 83, which acts as the Proton donor. Catalysis depends on cysteine 119, which acts as the Nucleophile.

The protein belongs to the carbon-nitrogen hydrolase superfamily. NIT1/NIT2 family.

The chain is Hydrolase in agr operon from Staphylococcus lugdunensis.